Consider the following 352-residue polypeptide: Transcription factor MYB86 (352 aa).

HTH myb-type domains are found at residues 9–61 and 62–116; these read KQKL…INYL and RPDL…KKKL. DNA-binding regions (H-T-H motif) lie at residues 37-61 and 89-112; these read WSSV…INYL and WSQI…NSCL.

Expressed in stems, flowers and seeds. Weakly expressed in leaves and roots.

The protein localises to the nucleus. Probable transcription factor. This chain is Transcription factor MYB86 (MYB86), found in Arabidopsis thaliana (Mouse-ear cress).